Reading from the N-terminus, the 924-residue chain is Alpha-actinin, sarcomeric (924 aa).

The actin-binding stretch occupies residues 1-250 (MMMENGLSME…IMTYVSCYYH (250 aa)). Calponin-homology (CH) domains are found at residues 34 to 138 (KQQK…LRFA) and 147 to 253 (MTAK…HAFQ). 4 Spectrin repeats span residues 251–395 (AFQG…TVSD), 396–510 (ISNS…RCQR), 511–631 (ICDQ…TAND), and 632–744 (MTRK…TMET). 2 EF-hand domains span residues 778–813 (EQLN…LGYS) and 819–854 (QGDL…ESTD). Residues D791, N793, T795, R797, and E802 each coordinate Ca(2+).

Belongs to the alpha-actinin family. In terms of assembly, homodimer; antiparallel. Interacts with Smn; the interaction occurs in adult thoracic tissues. Larval muscle isoform is expressed in the larval body wall, adult muscles of the head and abdomen and supercontractile muscles of the larva and adult. Adult muscle isoform accumulates within adult fibrillar and tubular muscles.

The protein localises to the cytoplasm. It is found in the myofibril. Its subcellular location is the sarcomere. The protein resides in the z line. Its function is as follows. F-actin cross-linking protein which is thought to anchor actin to a variety of intracellular structures. This is a bundling protein. The sequence is that of Alpha-actinin, sarcomeric (Actn) from Drosophila melanogaster (Fruit fly).